Here is a 289-residue protein sequence, read N- to C-terminus: Ribosomal RNA small subunit methyltransferase I (289 aa).

Belongs to the methyltransferase superfamily. RsmI family.

Its subcellular location is the cytoplasm. It catalyses the reaction cytidine(1402) in 16S rRNA + S-adenosyl-L-methionine = 2'-O-methylcytidine(1402) in 16S rRNA + S-adenosyl-L-homocysteine + H(+). Functionally, catalyzes the 2'-O-methylation of the ribose of cytidine 1402 (C1402) in 16S rRNA. This Helicobacter pylori (strain J99 / ATCC 700824) (Campylobacter pylori J99) protein is Ribosomal RNA small subunit methyltransferase I.